The sequence spans 374 residues: uncharacterized protein (374 aa).

Residues 1–13 (METKYHEYDDVQT) show a composition bias toward basic and acidic residues. Disordered regions lie at residues 1 to 20 (METKYHEYDDVQTKDTPSNK), 91 to 193 (SPMT…PLNQ), and 236 to 374 (KINN…SDFE). Residues 95-155 (NNNNNNNNNN…NNSSNNNNNN (61 aa)) are compositionally biased toward low complexity. Residues 166 to 193 (ISSNQSSPLSIYSTPPNPSSYVSSPLNQ) are compositionally biased toward polar residues. Pro residues predominate over residues 242-262 (APPPPPKACAPPPPPPPPPPI). Positions 277–300 (NNNNNNNNNNNSSNTNDSNNTNNT) are enriched in low complexity.

This is an uncharacterized protein from Dictyostelium discoideum (Social amoeba).